The primary structure comprises 182 residues: Adenine phosphoribosyltransferase (182 aa).

The protein belongs to the purine/pyrimidine phosphoribosyltransferase family. As to quaternary structure, homodimer.

It is found in the cytoplasm. It catalyses the reaction AMP + diphosphate = 5-phospho-alpha-D-ribose 1-diphosphate + adenine. It participates in purine metabolism; AMP biosynthesis via salvage pathway; AMP from adenine: step 1/1. Functionally, catalyzes a salvage reaction resulting in the formation of AMP, that is energically less costly than de novo synthesis. This is Adenine phosphoribosyltransferase from Ectopseudomonas mendocina (strain ymp) (Pseudomonas mendocina).